An 838-amino-acid polypeptide reads, in one-letter code: Valine--tRNA ligase (838 aa).

A 'HIGH' region motif is present at residues 46–56; sequence PNLTGTLHIGH. The 'KMSKS' region motif lies at 514–518; sequence KMSKS. Lys517 serves as a coordination point for ATP. The stretch at 768 to 838 forms a coiled coil; sequence VDNAANNLAH…HLIAKLTKAE (71 aa).

This sequence belongs to the class-I aminoacyl-tRNA synthetase family. ValS type 1 subfamily. In terms of assembly, monomer.

Its subcellular location is the cytoplasm. The enzyme catalyses tRNA(Val) + L-valine + ATP = L-valyl-tRNA(Val) + AMP + diphosphate. Functionally, catalyzes the attachment of valine to tRNA(Val). As ValRS can inadvertently accommodate and process structurally similar amino acids such as threonine, to avoid such errors, it has a 'posttransfer' editing activity that hydrolyzes mischarged Thr-tRNA(Val) in a tRNA-dependent manner. The sequence is that of Valine--tRNA ligase from Mycoplasma pneumoniae (strain ATCC 29342 / M129 / Subtype 1) (Mycoplasmoides pneumoniae).